The following is a 127-amino-acid chain: MARITAEDCNKIIPDRFRLVVLATRYAKLLNYKVETNQIKKEKRDKPPVIALRRIAAGKVSVAQLEQDLINSLRTRTMIEPLVNQDESEAVEEKFEYLSEVYIGEDYSDLDDQIFIDENGEDYETDK.

Belongs to the RNA polymerase subunit omega family. As to quaternary structure, the RNAP catalytic core consists of 2 alpha, 1 beta, 1 beta' and 1 omega subunit. When a sigma factor is associated with the core the holoenzyme is formed, which can initiate transcription.

It carries out the reaction RNA(n) + a ribonucleoside 5'-triphosphate = RNA(n+1) + diphosphate. In terms of biological role, promotes RNA polymerase assembly. Latches the N- and C-terminal regions of the beta' subunit thereby facilitating its interaction with the beta and alpha subunits. In Rickettsia peacockii (strain Rustic), this protein is DNA-directed RNA polymerase subunit omega.